The chain runs to 795 residues: Protein espinas (795 aa).

Residues 30–96 form a disordered region; that stretch reads GTGLTFPPHR…FVSPLQRRHC (67 aa). Residues 52 to 66 show a composition bias toward low complexity; it reads ASMSSNVASTATSSN. Residues 135-243 form the PET domain; it reads LDFQRNSQSD…AVRLLSDERP (109 aa). 3 consecutive LIM zinc-binding domains span residues 242–306, 307–367, and 368–430; these read RPCK…ETQK, PRCS…MFAE, and YCDY…GEPP. Disordered regions lie at residues 427 to 487 and 616 to 684; these read GEPP…GSAG and NRNT…EMQI. Composition is skewed to basic and acidic residues over residues 459-471 and 637-649; these read RSGD…ESSR and LDNR…RFHS. Residues 650 to 662 are compositionally biased toward polar residues; it reads VQDTMSRSKSYTD. Over residues 666 to 675 the composition is skewed to basic residues; that stretch reads ARRRRRRRNQ.

Belongs to the prickle / espinas / testin family.

The sequence is that of Protein espinas from Drosophila pseudoobscura pseudoobscura (Fruit fly).